A 230-amino-acid chain; its full sequence is Cytidylate kinase (230 aa).

ATP is bound at residue 11–19 (GQSAAGKST).

It belongs to the cytidylate kinase family. Type 1 subfamily.

The protein localises to the cytoplasm. The enzyme catalyses CMP + ATP = CDP + ADP. The catalysed reaction is dCMP + ATP = dCDP + ADP. The polypeptide is Cytidylate kinase (Chloroflexus aggregans (strain MD-66 / DSM 9485)).